We begin with the raw amino-acid sequence, 137 residues long: Nucleoside diphosphate kinase (137 aa).

Residues K11, F59, R87, T93, R104, and N114 each coordinate ATP. The active-site Pros-phosphohistidine intermediate is H117.

Belongs to the NDK family. As to quaternary structure, homotetramer. It depends on Mg(2+) as a cofactor.

The protein resides in the cytoplasm. It catalyses the reaction a 2'-deoxyribonucleoside 5'-diphosphate + ATP = a 2'-deoxyribonucleoside 5'-triphosphate + ADP. The enzyme catalyses a ribonucleoside 5'-diphosphate + ATP = a ribonucleoside 5'-triphosphate + ADP. Major role in the synthesis of nucleoside triphosphates other than ATP. The ATP gamma phosphate is transferred to the NDP beta phosphate via a ping-pong mechanism, using a phosphorylated active-site intermediate. This chain is Nucleoside diphosphate kinase, found in Frankia casuarinae (strain DSM 45818 / CECT 9043 / HFP020203 / CcI3).